We begin with the raw amino-acid sequence, 725 residues long: Methionine--tRNA ligase (725 aa).

The 'HIGH' region motif lies at 27-37 (PYANGQIHIGH). C158, C161, C171, and C174 together coordinate Zn(2+). The short motif at 348–352 (KMSKS) is the 'KMSKS' region element. Residue K351 coordinates ATP. One can recognise a tRNA-binding domain in the interval 619-725 (DFAKIDLRIA…SGAKPGMRVK (107 aa)).

It belongs to the class-I aminoacyl-tRNA synthetase family. MetG type 1 subfamily. As to quaternary structure, homodimer. It depends on Zn(2+) as a cofactor.

The protein resides in the cytoplasm. The catalysed reaction is tRNA(Met) + L-methionine + ATP = L-methionyl-tRNA(Met) + AMP + diphosphate. Is required not only for elongation of protein synthesis but also for the initiation of all mRNA translation through initiator tRNA(fMet) aminoacylation. This is Methionine--tRNA ligase from Burkholderia mallei (strain NCTC 10247).